The following is a 134-amino-acid chain: Interleukin-5 (134 aa).

The signal sequence occupies residues 1–21 (MRMHLHLTLVALGAAYVCANA). N-linked (GlcNAc...) asparagine glycans are attached at residues asparagine 76 and asparagine 90.

This sequence belongs to the IL-5 family. As to quaternary structure, homodimer; disulfide-linked. Interacts with IL5RA. Interacts with CSF2RB.

The protein resides in the secreted. In terms of biological role, homodimeric cytokine expressed predominantly by T-lymphocytes and NK cells that plays an important role in the survival, differentiation, and chemotaxis of eosinophils. Also acts on activated and resting B-cells to induce immunoglobulin production, growth, and differentiation. Mechanistically, exerts its biological effects through a receptor composed of IL5RA subunit and the cytokine receptor common subunit beta/CSF2RB. Binding to the receptor leads to activation of various kinases including LYN, SYK and JAK2 and thereby propagates signals through the RAS-MAPK and JAK-STAT5 pathways respectively. This chain is Interleukin-5 (IL5), found in Bos taurus (Bovine).